A 218-amino-acid chain; its full sequence is 23 kDa integral membrane protein (218 aa).

Topologically, residues 1-12 are cytoplasmic; sequence MATLGTGMRCLK. Residues 13–36 traverse the membrane as a helical segment; sequence SCVFILNIICLLCSLVLIGAGAYV. Residues 37–55 are Extracellular-facing; that stretch reads EVKFSQYEANLHKVWQAAP. Residues 56–71 form a helical membrane-spanning segment; it reads IAIIVVGVVILIVSFL. At 72 to 82 the chain is on the cytoplasmic side; that stretch reads GCCGAIKENVC. Residues 83–108 traverse the membrane as a helical segment; sequence MLYMYAFFLIVLLIAELVAAIVAVVY. Topologically, residues 109-183 are extracellular; the sequence is KDKIDDEINT…SVFSAFLKRN (75 aa). Residues 184–205 form a helical membrane-spanning segment; sequence LIIVACVAFGVCFFQLLSIVIA. Topologically, residues 206-218 are cytoplasmic; that stretch reads CCLGQRIHDYQNV.

The protein belongs to the tetraspanin (TM4SF) family.

The protein localises to the membrane. This Schistosoma japonicum (Blood fluke) protein is 23 kDa integral membrane protein.